The chain runs to 380 residues: Cytochrome b (380 aa).

The next 4 membrane-spanning stretches (helical) occupy residues 33–53 (FGSLLGVCLIIQILTGLFLAM), 77–98 (WLIRYLHANGASMFFICLFIHV), 113–133 (WNIGIVLLLTTMATAFVGYVL), and 178–198 (FFAFHFILPFIITALVLVHLL). Heme b contacts are provided by H83 and H97. The heme b site is built by H182 and H196. H201 lines the a ubiquinone pocket. The next 4 helical transmembrane spans lie at 226–246 (IKDLLGVLLLLMVLTILVLFF), 288–308 (LGGVXALXLSILILXXXPLLN), 320–340 (ITQVLYWIFXXNLXXXXXXXX), and 347–367 (XXXXXQIASICYXAIIIIFMP).

This sequence belongs to the cytochrome b family. The cytochrome bc1 complex contains 11 subunits: 3 respiratory subunits (MT-CYB, CYC1 and UQCRFS1), 2 core proteins (UQCRC1 and UQCRC2) and 6 low-molecular weight proteins (UQCRH/QCR6, UQCRB/QCR7, UQCRQ/QCR8, UQCR10/QCR9, UQCR11/QCR10 and a cleavage product of UQCRFS1). This cytochrome bc1 complex then forms a dimer. The cofactor is heme b.

It localises to the mitochondrion inner membrane. Functionally, component of the ubiquinol-cytochrome c reductase complex (complex III or cytochrome b-c1 complex) that is part of the mitochondrial respiratory chain. The b-c1 complex mediates electron transfer from ubiquinol to cytochrome c. Contributes to the generation of a proton gradient across the mitochondrial membrane that is then used for ATP synthesis. The sequence is that of Cytochrome b (MT-CYB) from Rhipidomys leucodactylus (White-footed climbing mouse).